We begin with the raw amino-acid sequence, 367 residues long: Phosphoribosylaminoimidazole-succinocarboxamide synthase (367 aa).

The protein belongs to the SAICAR synthetase family.

The catalysed reaction is 5-amino-1-(5-phospho-D-ribosyl)imidazole-4-carboxylate + L-aspartate + ATP = (2S)-2-[5-amino-1-(5-phospho-beta-D-ribosyl)imidazole-4-carboxamido]succinate + ADP + phosphate + 2 H(+). Its pathway is purine metabolism; IMP biosynthesis via de novo pathway; 5-amino-1-(5-phospho-D-ribosyl)imidazole-4-carboxamide from 5-amino-1-(5-phospho-D-ribosyl)imidazole-4-carboxylate: step 1/2. The protein is Phosphoribosylaminoimidazole-succinocarboxamide synthase of Shewanella sp. (strain MR-7).